A 468-amino-acid polypeptide reads, in one-letter code: Argininosuccinate lyase (468 aa).

It belongs to the lyase 1 family. Argininosuccinate lyase subfamily.

It is found in the cytoplasm. It catalyses the reaction 2-(N(omega)-L-arginino)succinate = fumarate + L-arginine. It functions in the pathway amino-acid biosynthesis; L-arginine biosynthesis; L-arginine from L-ornithine and carbamoyl phosphate: step 3/3. This is Argininosuccinate lyase from Zymomonas mobilis subsp. mobilis (strain ATCC 31821 / ZM4 / CP4).